We begin with the raw amino-acid sequence, 210 residues long: Imidazoleglycerol-phosphate dehydratase (210 aa).

This sequence belongs to the imidazoleglycerol-phosphate dehydratase family.

It localises to the cytoplasm. It carries out the reaction D-erythro-1-(imidazol-4-yl)glycerol 3-phosphate = 3-(imidazol-4-yl)-2-oxopropyl phosphate + H2O. It functions in the pathway amino-acid biosynthesis; L-histidine biosynthesis; L-histidine from 5-phospho-alpha-D-ribose 1-diphosphate: step 6/9. The polypeptide is Imidazoleglycerol-phosphate dehydratase (Acidovorax ebreus (strain TPSY) (Diaphorobacter sp. (strain TPSY))).